The following is a 293-amino-acid chain: RNA-binding Raly-like protein (293 aa).

Positions 21-92 constitute an RRM domain; the sequence is SRVFIGNLNT…QPLDINMAGE (72 aa). 2 disordered regions span residues 159 to 195 and 245 to 293; these read PRAA…KLKS and QDEC…LQIK. Low complexity predominate over residues 176-192; that stretch reads KGGSRSAVSGSSSSGSK. Residues 192 to 254 adopt a coiled-coil conformation; it reads KLKSDELQTI…QDECVSENAD (63 aa). The segment covering 259–284 has biased composition (acidic residues); the sequence is EPAEGAPDADGEELTDGVEEDFDEDG.

Belongs to the RRM HNRPC family. RALY subfamily.

The sequence is that of RNA-binding Raly-like protein (RALYL) from Bos taurus (Bovine).